We begin with the raw amino-acid sequence, 820 residues long: Sodium/hydrogen exchanger 1 (820 aa).

Over 1-102 the chain is Extracellular; it reads MMLRWSGIWG…FPVLDIDYLH (102 aa). The interval 44 to 71 is disordered; it reads ASTIRGSEPPRERSIGDVTTAPSEPLHH. The helical transmembrane segment at 103 to 125 threads the bilayer; it reads VRTPFEISLWILLACLMKIGFHV. Residues 126-134 lie on the Cytoplasmic side of the membrane; sequence IPTISSIVP. The chain crosses the membrane as a helical span at residues 135–152; sequence ESCLLIVVGLLVGGLIKG. The Extracellular portion of the chain corresponds to 153–162; that stretch reads VGETPPFLQS. Residues 163–180 traverse the membrane as a helical segment; that stretch reads DVFFLFLLPPIILDAGYF. The Cytoplasmic portion of the chain corresponds to 181-190; that stretch reads LPLRQFTENL. A helical transmembrane segment spans residues 191-219; the sequence is GTILIFAVVGTLWNAFFLGGLLYAVCLVG. Topologically, residues 220 to 226 are extracellular; sequence GEQINNI. A helical membrane pass occupies residues 227–253; sequence GLLDTLLFGSIISAVDPVAVLAVFEEI. Over 254-256 the chain is Cytoplasmic; that stretch reads HIN. The chain crosses the membrane as a helical span at residues 257-287; the sequence is ELLHILVFGESLLNDAVTVVLYHLFEEFASY. At 288–291 the chain is on the extracellular side; sequence EYVG. A helical transmembrane segment spans residues 292–326; that stretch reads ISDIFLGFLSFFVVSLGGVFVGVVYGVIAAFTSRF. At 327 to 332 the chain is on the cytoplasmic side; the sequence is TSHIRV. The chain crosses the membrane as a helical span at residues 333–345; the sequence is IEPLFVFLYSYMA. The Extracellular portion of the chain corresponds to 346 to 354; sequence YLSAELFHL. The helical transmembrane segment at 355–375 threads the bilayer; the sequence is SGIMALIASGVVMRPYVEANI. Residues 376–377 are Cytoplasmic-facing; the sequence is SH. Residues 378–408 form a helical membrane-spanning segment; the sequence is KSHTTIKYFLKMWSSVSETLIFIFLGVSTVA. Topologically, residues 409-414 are extracellular; sequence GSHQWN. The chain crosses the membrane as a helical span at residues 415 to 442; that stretch reads WTFVISTLLFCLIARVLGVLVLTWFINK. At 443–448 the chain is on the cytoplasmic side; sequence FRIVKL. Residues 449-473 form a helical membrane-spanning segment; the sequence is TPKDQFIIAYGGLRGAIAFSLGYLL. The Extracellular segment spans residues 474 to 479; that stretch reads DKKHFP. A helical membrane pass occupies residues 480-509; sequence MCDLFLTAIITVIFFTVFVQGMTIRPLVDL. The interaction with TESC stretch occupies residues 505–571; the sequence is PLVDLLAVKK…VKKCLIAGER (67 aa). The Cytoplasmic portion of the chain corresponds to 510–820; sequence LAVKKKQETK…EGEPFIPKGQ (311 aa). A PI(4,5)P2-binding region region spans residues 513 to 520; that stretch reads KKKQETKR. Positions 519–549 are interaction with CHP2; it reads KRSINEEIHTQFLDHLLTGIEDICGHYGHHH. A confers pH-dependent PI(4,5)P2 binding region spans residues 544–549; that stretch reads HYGHHH. Positions 556–564 are PI(4,5)P2-binding region; it reads RFNKKYVKK. 2 positions are modified to phosphoserine: Ser-603 and Ser-606. Thr-607 is modified (phosphothreonine). A phosphoserine mark is found at Ser-609 and Ser-652. The segment at 637–820 is interaction with TESC; that stretch reads KILRSNLQKT…EGEPFIPKGQ (184 aa). The tract at residues 637 to 820 is interaction with CALM1; it reads KILRSNLQKT…EGEPFIPKGQ (184 aa). The interaction with PPP3CA stretch occupies residues 688–691; that stretch reads LTVP. Phosphoserine occurs at positions 697, 701, and 707. The tract at residues 719–724 is interaction with PPP3CA; that stretch reads PVITID. A phosphoserine mark is found at Ser-727, Ser-730, and Ser-733. Positions 747-820 are disordered; sequence GLKRGPRTTP…EGEPFIPKGQ (74 aa). Phosphothreonine is present on residues Thr-755 and Thr-784. 2 positions are modified to phosphoserine: Ser-790 and Ser-801.

This sequence belongs to the monovalent cation:proton antiporter 1 (CPA1) transporter (TC 2.A.36) family. As to quaternary structure, homodimer; dimerization is crucial for its function. Oligomer. Interacts with CALM1 in a calcium-dependent manner. Interacts with TESC. Interacts (via residues 504-563) with CHP1. The interaction with CHP1 occurs at the plasma membrane in a calcium-dependent manner. Interacts with CHP2. The interaction with CHP2 occurs in a calcium-dependent manner. Interacts with EZR; regulates the cytoskeletal interactions of SLC9A1 and promotes stress fiber formation. N-glycosylated and O-glycosylated in the N-terminal region. In terms of processing, ubiquitinated, leading to its degradation by the proteasome. Ubiquitination is reduced by CHP1. Post-translationally, palmitoylated; may play a major role in SLC9A1 regulation. Phosphorylation at Thr-784 increases SLC9A1 activity; specifically dephosphorylated by PPP3CA. Specifically dephosphorylated at Thr-784 by PPP3CA that negatively regulates SLC9A1 activity. Phosphorylation at Ser-652 by AKT1 reduces SLC9A1 binding to CALM1. Widely expressed.

The protein resides in the cell membrane. The protein localises to the basolateral cell membrane. It carries out the reaction Na(+)(in) + H(+)(out) = Na(+)(out) + H(+)(in). It catalyses the reaction Li(+)(out) + H(+)(in) = Li(+)(in) + H(+)(out). The catalysed reaction is Li(+)(in) + Na(+)(out) = Li(+)(out) + Na(+)(in). Its activity is regulated as follows. Activated at acidic pHs. Inhibited by cariporide and eniporide. Inhibited by amiloride and 5-amino-substituted derivatives. Phosphatidylinositol 4,5-bisphosphate (PI(4,5)P2) bind and activates SLC9A1 transporter activity. Electroneutral Na(+) /H(+) antiporter that extrudes Na(+) in exchange for external protons driven by the inward sodium ion chemical gradient, protecting cells from acidification that occurs from metabolism. Exchanges intracellular H(+) ions for extracellular Na(+) in 1:1 stoichiometry. Plays a key role in maintening intracellular pH neutral and cell volume, and thus is important for cell growth, proliferation, migration and survival. In addition, can transport lithium Li(+) and also functions as a Na(+)/Li(+) antiporter. SLC9A1 also functions in membrane anchoring and organization of scaffolding complexes that coordinate signaling inputs. The sequence is that of Sodium/hydrogen exchanger 1 (Slc9a1) from Rattus norvegicus (Rat).